A 271-amino-acid chain; its full sequence is Mannosyl-3-phosphoglycerate phosphatase (271 aa).

Aspartate 13 functions as the Nucleophile in the catalytic mechanism. Mg(2+)-binding residues include aspartate 13, aspartate 15, and aspartate 214.

Belongs to the HAD-like hydrolase superfamily. MPGP family. The cofactor is Mg(2+).

It is found in the cytoplasm. It catalyses the reaction 2-O-(alpha-D-mannosyl)-3-phosphoglycerate + H2O = (2R)-2-O-(alpha-D-mannosyl)-glycerate + phosphate. This is Mannosyl-3-phosphoglycerate phosphatase from Escherichia coli (strain SE11).